The following is a 129-amino-acid chain: Small ribosomal subunit protein uS11 (129 aa).

Belongs to the universal ribosomal protein uS11 family. In terms of assembly, part of the 30S ribosomal subunit. Interacts with proteins S7 and S18. Binds to IF-3.

Its function is as follows. Located on the platform of the 30S subunit, it bridges several disparate RNA helices of the 16S rRNA. Forms part of the Shine-Dalgarno cleft in the 70S ribosome. The sequence is that of Small ribosomal subunit protein uS11 from Francisella tularensis subsp. tularensis (strain FSC 198).